The primary structure comprises 86 residues: Toxin Td8 (86 aa).

Positions 1-20 (MTRFVLFLSCFFLIGMVVEC) are cleaved as a signal peptide. Residues 21-83 (KDGYLVGDDG…IWNSATNRCR (63 aa)) form the LCN-type CS-alpha/beta domain. Intrachain disulfides connect Cys-31-Cys-82, Cys-35-Cys-57, Cys-43-Cys-63, and Cys-47-Cys-65. Arg-83 carries the post-translational modification Arginine amide.

As to expression, expressed by the venom gland.

Its subcellular location is the secreted. In terms of biological role, beta toxins bind voltage-independently at site-4 of sodium channels (Nav) and shift the voltage of activation toward more negative potentials thereby affecting sodium channel activation and promoting spontaneous and repetitive firing. In Tityus discrepans (Venezuelan scorpion), this protein is Toxin Td8.